Reading from the N-terminus, the 247-residue chain is STING ER exit protein (247 aa).

Phosphoserine is present on S127. Residues 195–216 (EAREIADSYANNARIIEKQLQR) adopt a coiled-coil conformation. Residues 215–247 (QRKGGKLSDVGIKTKTEDAPPPQKKQRGTLLER) form a disordered region.

The protein belongs to the STEEP1 family.

Molecular adapter that stimulates membrane curvature formation and subsequent endoplasmic reticulum exit site (ERES) establishment by recruiting PI3K complex I, leading to COPII vesicle-mediated transport. The protein is STING ER exit protein of Drosophila melanogaster (Fruit fly).